An 863-amino-acid chain; its full sequence is Glycogen phosphorylase (863 aa).

Position 618 is an N6-(pyridoxal phosphate)lysine (K618).

Belongs to the glycogen phosphorylase family. Pyridoxal 5'-phosphate serves as cofactor.

The enzyme catalyses [(1-&gt;4)-alpha-D-glucosyl](n) + phosphate = [(1-&gt;4)-alpha-D-glucosyl](n-1) + alpha-D-glucose 1-phosphate. Its function is as follows. Phosphorylase is an important allosteric enzyme in carbohydrate metabolism. Enzymes from different sources differ in their regulatory mechanisms and in their natural substrates. However, all known phosphorylases share catalytic and structural properties. The sequence is that of Glycogen phosphorylase (glgP) from Mycobacterium tuberculosis (strain CDC 1551 / Oshkosh).